Here is a 618-residue protein sequence, read N- to C-terminus: MKQSKLLIPTLREMPSDAQVISHALMVRAGYVRQVSAGIYAYLPLANRTIEKFKTIMREEFEKIGAVEMLAPALLTADLWRESGRYETYGEDLYKLKNRDNSDFILGPTHEETFTTLVRNAVKSYKQLPLNLYQIQSKYRDEKRPRNGLLRTREFIMKDGYSFHHNYEDLDVTYEDYRQAYEAIFTRAGLDFKGIIGDGGAMGGKDSQEFMAITPARTDLDRWVVLDKSIASMDDIPKEVLEEIKAELAAWMISGEDTIAYSTKSSYAANLEMATNEYKPSSKVAAEDALAEVETPHCKTIDEVAAFLSVDETQTIKTLLFVADNEPVVALLVGNDHINTVKLKNYLAADFLEPASEEEARAFFGAGFGSLGPVNLAQGSRIVADRKVQNLTNAVAGANKDGFHVTGVNPGRDFQAEYVDIREVKEGEMSPDGHGVLQFARGIEVGHIFKLGTRYSDSMGATILDENGRTVPIVMGCYGIGVSRILSAVIEQHARLFVNKTPKGDYRYAWGINFPKELAPFDVHLITVNVKDQVAQDLTAKLEADLMAKGYDVLTDDRNERVGSKFSDSDLIGLPIRVTVGKKAAEGIVEIKIKATGDSIEVNAENLIETLEILTKEH.

Belongs to the class-II aminoacyl-tRNA synthetase family. ProS type 1 subfamily. As to quaternary structure, homodimer.

The protein localises to the cytoplasm. It carries out the reaction tRNA(Pro) + L-proline + ATP = L-prolyl-tRNA(Pro) + AMP + diphosphate. Functionally, catalyzes the attachment of proline to tRNA(Pro) in a two-step reaction: proline is first activated by ATP to form Pro-AMP and then transferred to the acceptor end of tRNA(Pro). As ProRS can inadvertently accommodate and process non-cognate amino acids such as alanine and cysteine, to avoid such errors it has two additional distinct editing activities against alanine. One activity is designated as 'pretransfer' editing and involves the tRNA(Pro)-independent hydrolysis of activated Ala-AMP. The other activity is designated 'posttransfer' editing and involves deacylation of mischarged Ala-tRNA(Pro). The misacylated Cys-tRNA(Pro) is not edited by ProRS. This chain is Proline--tRNA ligase, found in Streptococcus pyogenes serotype M3 (strain ATCC BAA-595 / MGAS315).